We begin with the raw amino-acid sequence, 173 residues long: Crossover junction endodeoxyribonuclease RuvC (173 aa).

Catalysis depends on residues Asp-8, Glu-67, and Asp-139. Residues Asp-8, Glu-67, and Asp-139 each coordinate Mg(2+).

This sequence belongs to the RuvC family. In terms of assembly, homodimer which binds Holliday junction (HJ) DNA. The HJ becomes 2-fold symmetrical on binding to RuvC with unstacked arms; it has a different conformation from HJ DNA in complex with RuvA. In the full resolvosome a probable DNA-RuvA(4)-RuvB(12)-RuvC(2) complex forms which resolves the HJ. Mg(2+) serves as cofactor.

It localises to the cytoplasm. It catalyses the reaction Endonucleolytic cleavage at a junction such as a reciprocal single-stranded crossover between two homologous DNA duplexes (Holliday junction).. The RuvA-RuvB-RuvC complex processes Holliday junction (HJ) DNA during genetic recombination and DNA repair. Endonuclease that resolves HJ intermediates. Cleaves cruciform DNA by making single-stranded nicks across the HJ at symmetrical positions within the homologous arms, yielding a 5'-phosphate and a 3'-hydroxyl group; requires a central core of homology in the junction. The consensus cleavage sequence is 5'-(A/T)TT(C/G)-3'. Cleavage occurs on the 3'-side of the TT dinucleotide at the point of strand exchange. HJ branch migration catalyzed by RuvA-RuvB allows RuvC to scan DNA until it finds its consensus sequence, where it cleaves and resolves the cruciform DNA. The sequence is that of Crossover junction endodeoxyribonuclease RuvC from Shewanella oneidensis (strain ATCC 700550 / JCM 31522 / CIP 106686 / LMG 19005 / NCIMB 14063 / MR-1).